A 650-amino-acid chain; its full sequence is Acetoacetyl-coenzyme A synthetase (650 aa).

Position 199 to 202 (199 to 202 (YNGK)) interacts with CoA. ATP is bound by residues 392–394 (GSP), Asp504, Arg519, and Arg530. Val546 provides a ligand contact to Mg(2+). Arg587 is a binding site for CoA. Lys612 is subject to N6-acetyllysine.

It belongs to the ATP-dependent AMP-binding enzyme family. It depends on Mg(2+) as a cofactor. Post-translationally, acetylated. Deacetylation by the SIR2-homolog deacetylase activates the enzyme.

It carries out the reaction acetoacetate + ATP + CoA = acetoacetyl-CoA + AMP + diphosphate. It functions in the pathway biopolymer metabolism; poly-(R)-3-hydroxybutanoate degradation. Its function is as follows. Catalyzes the conversion of acetoacetate into acetoacetyl-CoA. Is involved in poly-3-hydroxybutyrate (PHB) degradation, which allows growth of R.meliloti on PHB cycle intermediates. In Rhizobium meliloti (strain 1021) (Ensifer meliloti), this protein is Acetoacetyl-coenzyme A synthetase.